A 138-amino-acid chain; its full sequence is Small ribosomal subunit protein uS11c (138 aa).

A disordered region spans residues 1 to 23 (MKKPIPRIGSRRNGRIGSRKNGR).

The protein belongs to the universal ribosomal protein uS11 family. In terms of assembly, part of the 30S ribosomal subunit.

It is found in the plastid. It localises to the chloroplast. The polypeptide is Small ribosomal subunit protein uS11c (Amborella trichopoda).